Here is a 492-residue protein sequence, read N- to C-terminus: 5-taurinomethyluridine-[tRNA] synthase subunit GTPB3, mitochondrial (492 aa).

The N-terminal 20 residues, 1 to 20, are a transit peptide targeting the mitochondrion; it reads MWRGLSALVTQAAWAPLRLC. 3 residues coordinate 5,10-methylenetetrahydrofolate: Arg-52, Glu-112, and Lys-152. A TrmE-type G domain is found at 249–416; that stretch reads GANVVVTGPP…LLQALKTELA (168 aa). Residues 256 to 263, 282 to 286, 303 to 306, and 374 to 377 each bind GTP; these read GPPNAGKS, GTTRD, DTAG, and NKSD. K(+) is bound at residue Asn-259. 2 residues coordinate Mg(2+): Ser-263 and Thr-284. Lys-492 is a 5,10-methylenetetrahydrofolate binding site.

It belongs to the TRAFAC class TrmE-Era-EngA-EngB-Septin-like GTPase superfamily. TrmE GTPase family. As to quaternary structure, homodimer; forms a dimer in the presence of potassium. Interacts with MTO1; forms the GTPBP3-MTO1 complex composed of homodimers of GTPBP3 and MTO1. The cofactor is K(+). Ubiquitously expressed. Highly expressed in tissues with high metabolic rates including heart, liver and brain. Weakly expressed in skeletal muscle.

It is found in the mitochondrion. The catalysed reaction is GTP + H2O = GDP + phosphate + H(+). Functionally, GTPase component of the GTPBP3-MTO1 complex that catalyzes the 5-taurinomethyluridine (taum(5)U) modification at the 34th wobble position (U34) of mitochondrial tRNAs (mt-tRNAs), which plays a role in mt-tRNA decoding and mitochondrial translation. Taum(5)U formation on mammalian mt-tRNA requires the presence of both GTPBP3-mediated GTPase activity and MTO1 catalytic activity. This Mus musculus (Mouse) protein is 5-taurinomethyluridine-[tRNA] synthase subunit GTPB3, mitochondrial.